The following is a 179-amino-acid chain: Large ribosomal subunit protein uL5 (179 aa).

It belongs to the universal ribosomal protein uL5 family. Part of the 50S ribosomal subunit; part of the 5S rRNA/L5/L18/L25 subcomplex. Contacts the 5S rRNA and the P site tRNA. Forms a bridge to the 30S subunit in the 70S ribosome.

Functionally, this is one of the proteins that bind and probably mediate the attachment of the 5S RNA into the large ribosomal subunit, where it forms part of the central protuberance. In the 70S ribosome it contacts protein S13 of the 30S subunit (bridge B1b), connecting the 2 subunits; this bridge is implicated in subunit movement. Contacts the P site tRNA; the 5S rRNA and some of its associated proteins might help stabilize positioning of ribosome-bound tRNAs. This is Large ribosomal subunit protein uL5 from Photorhabdus laumondii subsp. laumondii (strain DSM 15139 / CIP 105565 / TT01) (Photorhabdus luminescens subsp. laumondii).